Reading from the N-terminus, the 463-residue chain is Metalloprotease slr0863 (463 aa).

The protein belongs to the peptidase U62 family.

Functionally, probable metalloprotease. The sequence is that of Metalloprotease slr0863 from Synechocystis sp. (strain ATCC 27184 / PCC 6803 / Kazusa).